The following is a 272-amino-acid chain: Shikimate dehydrogenase (NADP(+)) (272 aa).

Shikimate-binding positions include 14–16 (SKS) and T61. The active-site Proton acceptor is the K65. Position 77 (E77) interacts with NADP(+). 2 residues coordinate shikimate: N86 and D102. NADP(+)-binding positions include 126-130 (GAGGA), 149-154 (NRTVSR), and M213. Y215 contacts shikimate. G237 is a binding site for NADP(+).

Belongs to the shikimate dehydrogenase family. Homodimer.

The enzyme catalyses shikimate + NADP(+) = 3-dehydroshikimate + NADPH + H(+). The protein operates within metabolic intermediate biosynthesis; chorismate biosynthesis; chorismate from D-erythrose 4-phosphate and phosphoenolpyruvate: step 4/7. Its function is as follows. Involved in the biosynthesis of the chorismate, which leads to the biosynthesis of aromatic amino acids. Catalyzes the reversible NADPH linked reduction of 3-dehydroshikimate (DHSA) to yield shikimate (SA). This is Shikimate dehydrogenase (NADP(+)) from Shigella boydii serotype 18 (strain CDC 3083-94 / BS512).